Here is a 149-residue protein sequence, read N- to C-terminus: Large ribosomal subunit protein uL11 (149 aa).

This sequence belongs to the universal ribosomal protein uL11 family. As to quaternary structure, part of the ribosomal stalk of the 50S ribosomal subunit. Interacts with L10 and the large rRNA to form the base of the stalk. L10 forms an elongated spine to which L12 dimers bind in a sequential fashion forming a multimeric L10(L12)X complex. Post-translationally, one or more lysine residues are methylated.

Functionally, forms part of the ribosomal stalk which helps the ribosome interact with GTP-bound translation factors. The polypeptide is Large ribosomal subunit protein uL11 (Azorhizobium caulinodans (strain ATCC 43989 / DSM 5975 / JCM 20966 / LMG 6465 / NBRC 14845 / NCIMB 13405 / ORS 571)).